Here is a 624-residue protein sequence, read N- to C-terminus: Phragmoplastin DRP1E (624 aa).

Residue Thr-2 is modified to N-acetylthreonine. Residues 37–306 enclose the Dynamin-type G domain; sequence WEALPTVAVV…LESVIRTRIP (270 aa). Residues 47–54 form a G1 motif region; the sequence is GGQSSGKS. 50-55 provides a ligand contact to GTP; that stretch reads SSGKSS. Residues 73-75 form a G2 motif region; the sequence is VTR. The segment at 148-151 is G3 motif; it reads DLPG. Residues 217–220 form a G4 motif region; it reads TKLD. Residues 218–223 and 248–251 contribute to the GTP site; these read KLDLMD and NRSQ. Positions 247 to 250 are G5 motif; that stretch reads VNRS. In terms of domain architecture, GED spans 532–624; it reads FRRIASNVSA…DEIDAVAWVR (93 aa).

This sequence belongs to the TRAFAC class dynamin-like GTPase superfamily. Dynamin/Fzo/YdjA family. Forms homodimer and may homooligomerize and heterooligomerize to form the phragmoplastin complex. Binds to PHIP1. In terms of tissue distribution, ubiquitous.

It is found in the cytoplasm. Its subcellular location is the cytoskeleton. The protein localises to the phragmoplast. The catalysed reaction is GTP + H2O = GDP + phosphate + H(+). In terms of biological role, microtubule-associated force-producing protein that is targeted to the tubulo-vesicular network of the forming cell plate during cytokinesis. Also plays a major role in plasma membrane maintenance and cell wall integrity with an implication in vesicular trafficking, polar cell expansion, and other aspects of plant growth and development. Has a GTPase activity. The sequence is that of Phragmoplastin DRP1E from Arabidopsis thaliana (Mouse-ear cress).